A 231-amino-acid chain; its full sequence is Small ribosomal subunit protein uS2 (231 aa).

The segment at 1 to 23 (MKVTNLSEKEERGGELTEAEKEE) is disordered. Basic and acidic residues predominate over residues 7-23 (SEKEERGGELTEAEKEE).

The protein belongs to the universal ribosomal protein uS2 family.

The polypeptide is Small ribosomal subunit protein uS2 (rps2) (Saccharolobus solfataricus (strain ATCC 35092 / DSM 1617 / JCM 11322 / P2) (Sulfolobus solfataricus)).